Here is a 447-residue protein sequence, read N- to C-terminus: MISRVSRFMTTFVSKYLPDPLIFAVLLTFVTFICAWGLTDSTPVDLVNMWGNGFWNLLGFGMQMALIVVTGNALATSPQIRKFLSTIASIAKTPAQGVVLVTFMGSIACIINWGFGLVVGAMFAKEVARRIKGSDYALLIACAYIAFMTWGGGFSGSMPLLAATPGNPVAHLMMSESNPQGIIPAVSTLFSGYNIFITLSLVICLPFITYMMMPKNGETKSIDPKLIAPDPTFDKKLDKDATLAEKMEESRFLAYTIGALGYSYLGMYFYKNGFNLTINNVNLIFLITGIVLHGSPMAYMRAIINATRSTAGILVQFPFYAGVQLMMEHSGLGGLITEFFINVANKDSFPLLTFFSSAFINFAVPSGGGHWVIQGPFVIPAAQALGADLGKSTMAIAYGEQWMNMAQPFWALPALGIAGLGVRDIMGFCMTALIFTAPIFIIGLYFL.

Helical transmembrane passes span 17-37, 49-69, 98-118, 136-156, 188-208, 252-272, 284-304, 321-341, 359-379, 402-422, and 427-447; these read LPDP…CAWG, MWGN…LIVV, VVLV…FGLV, YALL…GFSG, TLFS…LPFI, FLAY…FYKN, IFLI…RAII, AGVQ…EFFI, FINF…PFVI, WMNM…GLGV, and GFCM…LYFL.

Its subcellular location is the cell inner membrane. May be responsible for the uptake of short-chain fatty acids. The polypeptide is Putative short-chain fatty acid transporter (atoE) (Haemophilus influenzae (strain ATCC 51907 / DSM 11121 / KW20 / Rd)).